Here is a 514-residue protein sequence, read N- to C-terminus: Na(+)/H(+) antiporter NhaB (514 aa).

A run of 12 helical transmembrane segments spans residues 23-43, 63-83, 97-117, 120-140, 144-164, 202-222, 238-258, 303-323, 357-377, 391-411, 447-467, and 475-495; these read LALL…PFIA, PLLP…TSAA, LLLM…LFIF, LLLS…AAAF, FLDA…FYGI, LMMH…VGEP, FFLR…LTCM, AIIG…VGLI, LTVF…APII, LFYL…VGTI, ATPN…APLI, and VWMA…CVEF.

This sequence belongs to the NhaB Na(+)/H(+) (TC 2.A.34) antiporter family.

It is found in the cell inner membrane. It catalyses the reaction 2 Na(+)(in) + 3 H(+)(out) = 2 Na(+)(out) + 3 H(+)(in). Na(+)/H(+) antiporter that extrudes sodium in exchange for external protons. The sequence is that of Na(+)/H(+) antiporter NhaB from Salmonella heidelberg (strain SL476).